The following is a 241-amino-acid chain: Transcription initiation factor TFIID subunit 14 (241 aa).

The YEATS domain occupies 1 to 137 (MTTVKRTVRL…PGLLKALTAT (137 aa)). The tract at residues 141-169 (PGYSDEGEEARKDKRKNESEVGAGKKKAK) is disordered. The span at 149-159 (EARKDKRKNES) shows a compositional bias: basic and acidic residues.

It belongs to the TAF14 family. Component of the fcp1/TFIIF/polII complex via interaction of tfg3 with both tfg1/TFIIF-alpha and tfg2/TFIIF-beta subunits. Component of the SWI/SNF global transcription activator complex composed of at least arp9, arp42, snf5, snf22, snf30, sbf59, sol1, ssr1, ssr2, ssr3, ssr4 and tfg3. Also interacts with the TATA-binding protein (TBP). Component of the mst2 complex composed of at least eaf6, mst2, nto1, pdp3, ptf1, ptf2 and tfg3.

Its subcellular location is the nucleus. It localises to the nucleoplasm. Its function is as follows. Functions as a component of the DNA-binding general transcription factor complex TFIID, and the RNA polymerase II associated general transcription factor complex TFIIF. Binding of TFIID to a promoter (with or without TATA element) is the initial step in preinitiation complex (PIC) formation. TFIID plays a key role in the regulation of gene expression by RNA polymerase II through different activities such as transcription activator interaction, core promoter recognition and selectivity, TFIIA and TFIIB interaction, facilitation of DNA opening and initiation of transcription. TFIIF is essential for the initiation of transcription by RNA polymerase II. TFIIF functions include the recruitment of RNA polymerase II to the promoter bound DNA-TBP-TFIIB complex, decreasing the affinity of RNA polymerase II for non-specific DNA, allowing for the subsequent recruitment of TFIIE and TFIIH, and facilitating RNA polymerase II elongation. The TAF14 subunit has stimulatory activity. Component of the SWI/SNF complex, an ATP-dependent chromatin remodeling complex, required for the positive and negative regulation of gene expression of a large number of genes. It changes chromatin structure by altering DNA-histone contacts within a nucleosome, leading eventually to a change in nucleosome position, thus facilitating or repressing binding of gene-specific transcription factors. Component of the mst2 complex which is a highly specific H3 lysine 14 (H3K14) acetyltransferase that functions together with gcn5 to regulate global levels of H3K14 acetylation (H3K14ac), critical for DNA damage checkpoint activation. The sequence is that of Transcription initiation factor TFIID subunit 14 (tfg3) from Schizosaccharomyces pombe (strain 972 / ATCC 24843) (Fission yeast).